The chain runs to 1220 residues: Plasma membrane calcium-transporting ATPase 1 (1220 aa).

At Gly2 the chain carries N-acetylglycine. Residues 2–105 (GDMANNSVAY…KTFLQLVWEA (104 aa)) are Cytoplasmic-facing. Phosphoserine is present on residues Ser8 and Ser17. Residues 106–126 (LQDVTLIILEIAAIVSLGLSF) form a helical membrane-spanning segment. The Extracellular segment spans residues 127–154 (YQPPEGDNALCGEVSVGEEEGEGETGWI). Residues 155 to 175 (EGAAILLSVVCVVLVTAFNDW) traverse the membrane as a helical segment. Residues 176 to 366 (SKEKQFRGLQ…KEKSVLQGKL (191 aa)) lie on the Cytoplasmic side of the membrane. A disordered region spans residues 297-356 (EEEKKDEKKKEKKNKKQDGAIENRNKAKAQDGAAMEMQPLKSEEGGDGDEKDKKKANLPK). Composition is skewed to basic and acidic residues over residues 312-325 (KQDG…KAKA) and 337-356 (KSEE…NLPK). Phosphoserine is present on Ser338. A helical transmembrane segment spans residues 367 to 386 (TKLAVQIGKAGLLMSAITVI). At 387–418 (ILVLYFVIDTFWVQKRPWLAECTPIYIQYFVK) the chain is on the extracellular side. The helical transmembrane segment at 419–439 (FFIIGVTVLVVAVPEGLPLAV) threads the bilayer. Residues 440 to 855 (TISLAYSVKK…RNVYDSISKF (416 aa)) lie on the Cytoplasmic side of the membrane. Asp475 serves as the catalytic 4-aspartylphosphate intermediate. Mg(2+) contacts are provided by Asp475, Thr477, and Asp797. Residues 856 to 876 (LQFQLTVNVVAVIVAFTGACI) form a helical membrane-spanning segment. Residues 877–882 (TQDSPL) lie on the Extracellular side of the membrane. A helical transmembrane segment spans residues 883–903 (KAVQMLWVNLIMDTLASLALA). At 904–927 (TEPPTESLLLRKPYGRNKPLISRT) the chain is on the cytoplasmic side. The helical transmembrane segment at 928-948 (MMKNILGHAFYQLVVVFTLLF) threads the bilayer. Residues 949–971 (AGEKFFDIDSGRNAPLHAPPSEH) are Extracellular-facing. The chain crosses the membrane as a helical span at residues 972–991 (YTIVFNTFVLMQLFNEINAR). The Cytoplasmic segment spans residues 992-1005 (KIHGERNVFEGIFN). The chain crosses the membrane as a helical span at residues 1006–1027 (NAIFCTIVLGTFVVQIIIVQFG). Over 1028–1039 (GKPFSCSELSIE) the chain is Extracellular. The helical transmembrane segment at 1040–1060 (QWLWSIFLGMGTLLWGQLIST) threads the bilayer. Residues 1061-1220 (IPTSRLKFLK…SPLHSLETSL (160 aa)) are Cytoplasmic-facing. The tract at residues 1100 to 1117 (LRRGQILWFRGLNRIQTQ) is calmodulin-binding subdomain A. Phosphothreonine; by PKC is present on Thr1116. The interval 1118–1220 (IRVVNAFRSS…SPLHSLETSL (103 aa)) is required for basolateral membrane targeting. Phosphoserine is present on residues Ser1140 and Ser1155. Residues 1160–1220 (PLIDDTDAED…SPLHSLETSL (61 aa)) form a disordered region. Thr1165 carries the post-translational modification Phosphothreonine. 2 positions are modified to phosphoserine: Ser1178 and Ser1182. Over residues 1200-1220 (MNKSATSSSPGSPLHSLETSL) the composition is skewed to polar residues.

It belongs to the cation transport ATPase (P-type) (TC 3.A.3) family. Type IIB subfamily. Monomer. Dimer. Oligomer. Calmodulin binding. Interacts with PDZD11. Interacts with SLC35G1 and STIM1. Interacts with YWHAE; interacts with the monomeric and dimeric forms of the YWHAE but prefer the monomer form; this interaction inhibits calcium-transporting ATPase activity. Interacts with NPTN; this interaction stabilizes ATP2B1 and increases ATPase activity; this interaction controls T cell calcium homeostasis following T cell activation. Interacts with EPB41; regulates small intestinal calcium absorption through regulation of membrane expression of ATP2B1. In terms of tissue distribution, expressed in the retina, with strongest expression in the outer plexiform layer and lower expression levels in the inner nuclear layer and the inner plexiform layer. Specifically expressed in the following retinal cell types: photoreceptor cells, cone bipolar cells and horizontal cells. Expressed in osteoclasts (at protein level). Expressed at highest levels in brain, intestine, kidney, and stomach, and at lower levels in liver, lung, aorta, portal vein, urinary bladder, diaphragm, seminal vesicles and testes. Expressed in small intestinal epithelium.

The protein resides in the cell membrane. It is found in the basolateral cell membrane. It localises to the synapse. Its subcellular location is the presynaptic cell membrane. The protein localises to the cytoplasmic vesicle. The protein resides in the secretory vesicle. It is found in the synaptic vesicle membrane. It catalyses the reaction Ca(2+)(in) + ATP + H2O = Ca(2+)(out) + ADP + phosphate + H(+). In terms of biological role, catalyzes the hydrolysis of ATP coupled with the transport of calcium from the cytoplasm to the extracellular space thereby maintaining intracellular calcium homeostasis. Plays a role in blood pressure regulation through regulation of intracellular calcium concentration and nitric oxide production leading to regulation of vascular smooth muscle cells vasoconstriction. Positively regulates bone mineralization through absorption of calcium from the intestine. Plays dual roles in osteoclast differentiation and survival by regulating RANKL-induced calcium oscillations in preosteoclasts and mediating calcium extrusion in mature osteoclasts. Regulates insulin sensitivity through calcium/calmodulin signaling pathway by regulating AKT1 activation and NOS3 activation in endothelial cells. May play a role in synaptic transmission by modulating calcium and proton dynamics at the synaptic vesicles. This is Plasma membrane calcium-transporting ATPase 1 from Mus musculus (Mouse).